The sequence spans 294 residues: Cytidine deaminase (294 aa).

CMP/dCMP-type deaminase domains lie at 48 to 168 (DDNT…FGPN) and 187 to 294 (ETTD…YYTF). Residue 89–91 (NME) coordinates substrate. His-102 contributes to the Zn(2+) binding site. The active-site Proton donor is the Glu-104. Zn(2+)-binding residues include Cys-129 and Cys-132.

The protein belongs to the cytidine and deoxycytidylate deaminase family. As to quaternary structure, homodimer. Requires Zn(2+) as cofactor.

The enzyme catalyses cytidine + H2O + H(+) = uridine + NH4(+). It carries out the reaction 2'-deoxycytidine + H2O + H(+) = 2'-deoxyuridine + NH4(+). In terms of biological role, this enzyme scavenges exogenous and endogenous cytidine and 2'-deoxycytidine for UMP synthesis. The protein is Cytidine deaminase of Photorhabdus laumondii subsp. laumondii (strain DSM 15139 / CIP 105565 / TT01) (Photorhabdus luminescens subsp. laumondii).